The chain runs to 203 residues: Protein ILM1 (203 aa).

Residues 1–3 (MAQ) are Cytoplasmic-facing. Residues 4-24 (ALNSTNIAFFRVAFLFTIAFF) traverse the membrane as a helical segment. The Lumenal segment spans residues 25–58 (CLKNVNSILQNTYFIVLTQAMNLPQLTLSRYSGQ). Residues 59–79 (LGLFALLFTLNGVHDLIPLLE) traverse the membrane as a helical segment. Topologically, residues 80–92 (NNVKYFQSVVPVR) are cytoplasmic. Residues 93 to 113 (LLIFFILTSISYLWESNFYVH) traverse the membrane as a helical segment. A topological domain (lumenal) is located at residue Asn-114. Residues 115–135 (NSVFIYCFAEVWINFLLYNAI) traverse the membrane as a helical segment. Residues 136–203 (REEKNEEFKR…KGNDDSDAKK (68 aa)) are Cytoplasmic-facing. The segment covering 175-187 (INDEENDDEDGKD) has biased composition (acidic residues). The disordered stretch occupies residues 175–203 (INDEENDDEDGKDNDDNNEKGNDDSDAKK). A compositionally biased stretch (basic and acidic residues) spans 188-203 (NDDNNEKGNDDSDAKK).

It belongs to the ILM1 family.

It localises to the endoplasmic reticulum membrane. This chain is Protein ILM1 (ILM1), found in Saccharomyces cerevisiae (strain ATCC 204508 / S288c) (Baker's yeast).